Consider the following 652-residue polypeptide: Iron-regulated outer membrane virulence protein (652 aa).

Residues 1 to 25 form the signal peptide; the sequence is MSRFNPSPVSLSVTLGLMFSASAFA. Residues 33–40 carry the TonB box motif; it reads ETMVVTAA. The 118-residue stretch at 45-162 folds into the TBDR plug domain; it reads VIQNAPASIS…IGGVINIITR (118 aa). The TBDR beta-barrel domain occupies 167 to 652; that stretch reads QWSGNVQLST…RYWLGLDIAF (486 aa). The short motif at 635 to 652 is the TonB C-terminal box element; sequence YGYVEDGRRYWLGLDIAF.

This sequence belongs to the TonB-dependent receptor family.

It is found in the cell outer membrane. Involved in the initial step of iron uptake by binding ferric vibriobactin, an iron chelatin siderophore that allows V.cholerae to extract iron from the environment. This chain is Iron-regulated outer membrane virulence protein (irgA), found in Vibrio cholerae serotype O1 (strain ATCC 39315 / El Tor Inaba N16961).